Here is a 26-residue protein sequence, read N- to C-terminus: MTATILVADDDAAIRTVLNQALSRAG.

Residues 4–26 (TILVADDDAAIRTVLNQALSRAG) enclose the Response regulatory domain.

Post-translationally, phosphorylated and dephosphorylated by NtrB.

It localises to the cytoplasm. Its function is as follows. Member of the two-component regulatory system NtrB/NtrC, which controls expression of the nitrogen-regulated (ntr) genes in response to nitrogen limitation. Phosphorylated NtrC binds directly to DNA and stimulates the formation of open promoter-sigma54-RNA polymerase complexes. This is DNA-binding transcriptional regulator NtrC (ntrC) from Rhizobium leguminosarum bv. phaseoli.